Here is a 326-residue protein sequence, read N- to C-terminus: Peroxidase 41 (326 aa).

The first 20 residues, 1-20, serve as a signal peptide directing secretion; sequence MSSVINVLFVVLVFVPSIYS. N-linked (GlcNAc...) asparagine glycosylation occurs at Asn-25. 4 cysteine pairs are disulfide-bonded: Cys-35-Cys-116, Cys-68-Cys-73, Cys-122-Cys-318, and Cys-201-Cys-228. The active-site Proton acceptor is His-66. Positions 67, 72, 74, and 76 each coordinate Ca(2+). Pro-164 contacts substrate. A glycan (N-linked (GlcNAc...) asparagine) is linked at Asn-167. Position 194 (His-194) interacts with heme b. Thr-195 contacts Ca(2+). The N-linked (GlcNAc...) asparagine glycan is linked to Asn-234. Residues Asp-242, Thr-245, and Asp-250 each coordinate Ca(2+). N-linked (GlcNAc...) asparagine glycosylation is present at Asn-286.

Belongs to the peroxidase family. Classical plant (class III) peroxidase subfamily. Heme b is required as a cofactor. Requires Ca(2+) as cofactor.

Its subcellular location is the secreted. The enzyme catalyses 2 a phenolic donor + H2O2 = 2 a phenolic radical donor + 2 H2O. In terms of biological role, removal of H(2)O(2), oxidation of toxic reductants, biosynthesis and degradation of lignin, suberization, auxin catabolism, response to environmental stresses such as wounding, pathogen attack and oxidative stress. These functions might be dependent on each isozyme/isoform in each plant tissue. The chain is Peroxidase 41 (PER41) from Arabidopsis thaliana (Mouse-ear cress).